The following is a 233-amino-acid chain: UPF0758 protein TTE0897 (233 aa).

The MPN domain occupies 108-230 (SVTSPEDVIN…GISLKEKGYY (123 aa)). Zn(2+) is bound by residues histidine 179, histidine 181, and aspartate 192. Residues 179-192 (HNHPSGDPTPSRED) carry the JAMM motif motif.

This sequence belongs to the UPF0758 family.

The chain is UPF0758 protein TTE0897 from Caldanaerobacter subterraneus subsp. tengcongensis (strain DSM 15242 / JCM 11007 / NBRC 100824 / MB4) (Thermoanaerobacter tengcongensis).